A 154-amino-acid chain; its full sequence is Putative NADPH-dependent 7-cyano-7-deazaguanine reductase (154 aa).

Asp52 acts as the Proton donor in catalysis. Substrate is bound by residues 67–69 (VES) and 86–87 (HE).

Belongs to the GTP cyclohydrolase I family. QueF type 1 subfamily.

The protein localises to the cytoplasm. It carries out the reaction 7-aminomethyl-7-carbaguanine + 2 NADP(+) = 7-cyano-7-deazaguanine + 2 NADPH + 3 H(+). It participates in tRNA modification; tRNA-queuosine biosynthesis. In terms of biological role, catalyzes the NADPH-dependent reduction of 7-cyano-7-deazaguanine (preQ0) to 7-aminomethyl-7-deazaguanine (preQ1). The chain is Putative NADPH-dependent 7-cyano-7-deazaguanine reductase from Streptococcus pneumoniae (strain ATCC BAA-255 / R6).